Consider the following 364-residue polypeptide: Mannose-1-phosphate guanylyltransferase catalytic subunit beta (364 aa).

The interval 2–220 (KALILVGGYG…PGFWMDVGQP (219 aa)) is substrate-binding domain. A GDP-alpha-D-mannose-binding site is contributed by Asp109. Mg(2+) is bound at residue Asp109. Lys160 is an active-site residue. GDP-alpha-D-mannose is bound at residue Asp216. Mg(2+) is bound at residue Asp216. Residues 243 to 364 (ATGSNIHGTA…VNVPSKDIIM (122 aa)) form a hexapeptide repeat domain region.

The protein belongs to the transferase hexapeptide repeat family. As to quaternary structure, component of the GMPPA-GMPPB mannose-1-phosphate guanylyltransferase complex composed of 4 GMPPA subunits and 8 tag-335/GMPPB subunits; the complex is organized into three layers, a central layer made up of 2 GMPPA dimers sandwiched between two layers each made up of 2 tag-335/GMPPB dimers. Catalytic activity of tag-335/GMPPB is reduced when part of the complex and binding of GDP-alpha-D-Mannose by GMPPA induces allosteric feedback inhibition of tag-335/GMPPB. Mg(2+) serves as cofactor.

It carries out the reaction alpha-D-mannose 1-phosphate + GTP + H(+) = GDP-alpha-D-mannose + diphosphate. It functions in the pathway nucleotide-sugar biosynthesis; GDP-alpha-D-mannose biosynthesis; GDP-alpha-D-mannose from alpha-D-mannose 1-phosphate (GTP route): step 1/1. With respect to regulation, enzyme activity is reduced by incorporation into the GMPPA-GMPPB mannose-1-phosphate guanylyltransferase complex. Allosterically inhibited, when part of the GMPPA-GMPPB complex, by GDP-alpha-D-mannose binding to GMPPA. Catalytic subunit of the GMPPA-GMPPB mannose-1-phosphate guanylyltransferase complex. Catalyzes the formation of GDP-mannose, an essential precursor of glycan moieties of glycoproteins and glycolipids. Can catalyze the reverse reaction in vitro. Together with GMPPA regulates GDP-alpha-D-mannose levels. This Caenorhabditis briggsae protein is Mannose-1-phosphate guanylyltransferase catalytic subunit beta.